A 383-amino-acid chain; its full sequence is Queuine tRNA-ribosyltransferase (383 aa).

The active-site Proton acceptor is the Asp92. Substrate contacts are provided by residues 92–96, Asp146, Gln190, and Gly217; that span reads DSGGF. The RNA binding stretch occupies residues 248 to 254; it reads GVGKPED. The active-site Nucleophile is Asp267. The segment at 272–276 is RNA binding; important for wobble base 34 recognition; the sequence is TRNAR. Zn(2+)-binding residues include Cys310, Cys312, Cys315, and His341.

The protein belongs to the queuine tRNA-ribosyltransferase family. In terms of assembly, homodimer. Within each dimer, one monomer is responsible for RNA recognition and catalysis, while the other monomer binds to the replacement base PreQ1. Zn(2+) serves as cofactor.

It catalyses the reaction 7-aminomethyl-7-carbaguanine + guanosine(34) in tRNA = 7-aminomethyl-7-carbaguanosine(34) in tRNA + guanine. It functions in the pathway tRNA modification; tRNA-queuosine biosynthesis. Its function is as follows. Catalyzes the base-exchange of a guanine (G) residue with the queuine precursor 7-aminomethyl-7-deazaguanine (PreQ1) at position 34 (anticodon wobble position) in tRNAs with GU(N) anticodons (tRNA-Asp, -Asn, -His and -Tyr). Catalysis occurs through a double-displacement mechanism. The nucleophile active site attacks the C1' of nucleotide 34 to detach the guanine base from the RNA, forming a covalent enzyme-RNA intermediate. The proton acceptor active site deprotonates the incoming PreQ1, allowing a nucleophilic attack on the C1' of the ribose to form the product. After dissociation, two additional enzymatic reactions on the tRNA convert PreQ1 to queuine (Q), resulting in the hypermodified nucleoside queuosine (7-(((4,5-cis-dihydroxy-2-cyclopenten-1-yl)amino)methyl)-7-deazaguanosine). This is Queuine tRNA-ribosyltransferase from Psychrobacter cryohalolentis (strain ATCC BAA-1226 / DSM 17306 / VKM B-2378 / K5).